Here is a 150-residue protein sequence, read N- to C-terminus: Ribosome-binding factor A (150 aa).

The interval 131–150 (LSHDDDEDGGADEAPRNGDE) is disordered.

This sequence belongs to the RbfA family. As to quaternary structure, monomer. Binds 30S ribosomal subunits, but not 50S ribosomal subunits or 70S ribosomes.

It localises to the cytoplasm. One of several proteins that assist in the late maturation steps of the functional core of the 30S ribosomal subunit. Associates with free 30S ribosomal subunits (but not with 30S subunits that are part of 70S ribosomes or polysomes). Required for efficient processing of 16S rRNA. May interact with the 5'-terminal helix region of 16S rRNA. The protein is Ribosome-binding factor A of Brucella melitensis biotype 2 (strain ATCC 23457).